We begin with the raw amino-acid sequence, 110 residues long: Small ribosomal subunit protein bS18c (110 aa).

The protein belongs to the bacterial ribosomal protein bS18 family. In terms of assembly, part of the 30S ribosomal subunit.

Its subcellular location is the plastid. The protein resides in the chloroplast. This is Small ribosomal subunit protein bS18c (rps18) from Pisum sativum (Garden pea).